Consider the following 448-residue polypeptide: Trigger factor (448 aa).

The PPIase FKBP-type domain occupies 161-246 (GDQVTIDFEG…VHKVAGKQLP (86 aa)). Residues 428 to 448 (ALQAAQQQEGAEEEAQEETSA) form a disordered region. The span at 437-448 (GAEEEAQEETSA) shows a compositional bias: acidic residues.

This sequence belongs to the FKBP-type PPIase family. Tig subfamily.

The protein resides in the cytoplasm. It carries out the reaction [protein]-peptidylproline (omega=180) = [protein]-peptidylproline (omega=0). Involved in protein export. Acts as a chaperone by maintaining the newly synthesized protein in an open conformation. Functions as a peptidyl-prolyl cis-trans isomerase. In Chromohalobacter salexigens (strain ATCC BAA-138 / DSM 3043 / CIP 106854 / NCIMB 13768 / 1H11), this protein is Trigger factor.